The following is a 269-amino-acid chain: NAD kinase (269 aa).

Asp-45 (proton acceptor) is an active-site residue. NAD(+) contacts are provided by residues 45–46, 122–123, Arg-149, Asp-151, and Ala-186; these read DG and NE.

The protein belongs to the NAD kinase family. It depends on a divalent metal cation as a cofactor.

The protein localises to the cytoplasm. The enzyme catalyses NAD(+) + ATP = ADP + NADP(+) + H(+). Its function is as follows. Involved in the regulation of the intracellular balance of NAD and NADP, and is a key enzyme in the biosynthesis of NADP. Catalyzes specifically the phosphorylation on 2'-hydroxyl of the adenosine moiety of NAD to yield NADP. In Staphylococcus saprophyticus subsp. saprophyticus (strain ATCC 15305 / DSM 20229 / NCIMB 8711 / NCTC 7292 / S-41), this protein is NAD kinase.